We begin with the raw amino-acid sequence, 378 residues long: Dihydroorotate dehydrogenase (quinone) (378 aa).

FMN contacts are provided by residues 77-81 and Thr101; that span reads AGFDK. A substrate-binding site is contributed by Lys81. 126–130 is a substrate binding site; sequence NRMGF. 2 residues coordinate FMN: Asn158 and Asn191. Asn191 provides a ligand contact to substrate. The active-site Nucleophile is Ser194. Asn196 lines the substrate pocket. FMN is bound by residues Lys229 and Thr257. 258-259 lines the substrate pocket; the sequence is NT. FMN-binding positions include Gly287, Gly316, and 337–338; that span reads YT.

The protein belongs to the dihydroorotate dehydrogenase family. Type 2 subfamily. In terms of assembly, monomer. It depends on FMN as a cofactor.

It localises to the cell membrane. The enzyme catalyses (S)-dihydroorotate + a quinone = orotate + a quinol. Its pathway is pyrimidine metabolism; UMP biosynthesis via de novo pathway; orotate from (S)-dihydroorotate (quinone route): step 1/1. Functionally, catalyzes the conversion of dihydroorotate to orotate with quinone as electron acceptor. In Synechococcus elongatus (strain ATCC 33912 / PCC 7942 / FACHB-805) (Anacystis nidulans R2), this protein is Dihydroorotate dehydrogenase (quinone).